The sequence spans 24 residues: Caerulein precursor fragment B4 (24 aa).

Expressed by the skin glands.

It is found in the secreted. In terms of biological role, has antibacterial and antifungal activity. The chain is Caerulein precursor fragment B4 from Xenopus borealis (Kenyan clawed frog).